The sequence spans 172 residues: Inorganic pyrophosphatase (172 aa).

The substrate site is built by K26, R40, and Y52. The Mg(2+) site is built by D62, D67, and D99. Y138 contributes to the substrate binding site.

Belongs to the PPase family. In terms of assembly, homohexamer. Mg(2+) is required as a cofactor.

The protein resides in the cytoplasm. It carries out the reaction diphosphate + H2O = 2 phosphate + H(+). Catalyzes the hydrolysis of inorganic pyrophosphate (PPi) forming two phosphate ions. The protein is Inorganic pyrophosphatase of Saccharolobus solfataricus (strain ATCC 35092 / DSM 1617 / JCM 11322 / P2) (Sulfolobus solfataricus).